Consider the following 1392-residue polypeptide: DNA-directed RNA polymerase subunit beta'' (1392 aa).

Zn(2+) is bound by residues Cys224, Cys295, Cys302, and Cys305.

Belongs to the RNA polymerase beta' chain family. RpoC2 subfamily. In plastids the minimal PEP RNA polymerase catalytic core is composed of four subunits: alpha, beta, beta', and beta''. When a (nuclear-encoded) sigma factor is associated with the core the holoenzyme is formed, which can initiate transcription. Zn(2+) is required as a cofactor.

It is found in the plastid. The protein resides in the chloroplast. It carries out the reaction RNA(n) + a ribonucleoside 5'-triphosphate = RNA(n+1) + diphosphate. DNA-dependent RNA polymerase catalyzes the transcription of DNA into RNA using the four ribonucleoside triphosphates as substrates. The protein is DNA-directed RNA polymerase subunit beta'' of Eucalyptus globulus subsp. globulus (Tasmanian blue gum).